Here is a 386-residue protein sequence, read N- to C-terminus: Pepsin A (386 aa).

A signal peptide spans 1 to 15 (MKWLLLISLVALSEC). A propeptide spans 16–60 (AIVKVPLVRKKSLRQNLIEHGLLNDFLKNQSPNPASKYFPQEPTV) (activation peptide). Residues 74–383 (YFGTIGIGTP…DRANNQVGLA (310 aa)) form the Peptidase A1 domain. The active site involves Asp-92. 2 cysteine pairs are disulfide-bonded: Cys-105/Cys-110 and Cys-266/Cys-270. Asp-275 is a catalytic residue. Cys-309 and Cys-342 are disulfide-bonded.

It belongs to the peptidase A1 family.

It localises to the secreted. It catalyses the reaction Preferential cleavage: hydrophobic, preferably aromatic, residues in P1 and P1' positions. Cleaves 1-Phe-|-Val-2, 4-Gln-|-His-5, 13-Glu-|-Ala-14, 14-Ala-|-Leu-15, 15-Leu-|-Tyr-16, 16-Tyr-|-Leu-17, 23-Gly-|-Phe-24, 24-Phe-|-Phe-25 and 25-Phe-|-Tyr-26 bonds in the B chain of insulin.. In terms of biological role, shows particularly broad specificity; although bonds involving phenylalanine and leucine are preferred, many others are also cleaved to some extent. The protein is Pepsin A (PGA) of Canis lupus familiaris (Dog).